Reading from the N-terminus, the 101-residue chain is ATP-dependent Clp protease adapter protein ClpS (101 aa).

Belongs to the ClpS family. In terms of assembly, binds to the N-terminal domain of the chaperone ClpA.

Functionally, involved in the modulation of the specificity of the ClpAP-mediated ATP-dependent protein degradation. The sequence is that of ATP-dependent Clp protease adapter protein ClpS from Corynebacterium jeikeium (strain K411).